Here is a 465-residue protein sequence, read N- to C-terminus: Paired box protein Pax-8 (465 aa).

Positions 26-152 (GHGGLNQLGG…SSINRIIRTK (127 aa)) form a DNA-binding region, paired. A PAI subdomain region spans residues 29-85 (GLNQLGGAFVNGRPLPEVVRQRIVDLAHQGVRPCDISRQLRVSHGCVSKILGRYYET). An RED subdomain region spans residues 104–152 (KVVEKIGDYKRQNPTMFAWEIRDRLLTDGVCDNDTVPSVSSINRIIRTK). Residues 206–227 (PSADGKRKLDDSDQESCRLSID) form a disordered region.

Expression starts at late gastrula stages in cells fated to become the primordia of the otic system and the pronephric kidney. Expression is maintained in these two structures through late tailbud stages. Does not appear to be expressed in the thyroid gland.

Its subcellular location is the nucleus. In terms of biological role, probable transcription factor. Involved in kidney development, acting synergistically with lhx1/lim-1 to establish the pronephric primordium in late gastrulae/early neurulae. This chain is Paired box protein Pax-8, found in Xenopus laevis (African clawed frog).